The following is a 169-amino-acid chain: Phosphopantetheine adenylyltransferase (169 aa).

Thr9 is a substrate binding site. Residues 9–10 (TF) and His17 contribute to the ATP site. The substrate site is built by Lys41, Leu73, and Arg87. ATP contacts are provided by residues 88–90 (GLR), Glu98, and 123–129 (YQFISGT).

It belongs to the bacterial CoaD family. In terms of assembly, homohexamer. The cofactor is Mg(2+).

Its subcellular location is the cytoplasm. The enzyme catalyses (R)-4'-phosphopantetheine + ATP + H(+) = 3'-dephospho-CoA + diphosphate. It functions in the pathway cofactor biosynthesis; coenzyme A biosynthesis; CoA from (R)-pantothenate: step 4/5. Reversibly transfers an adenylyl group from ATP to 4'-phosphopantetheine, yielding dephospho-CoA (dPCoA) and pyrophosphate. This is Phosphopantetheine adenylyltransferase from Bordetella bronchiseptica (strain ATCC BAA-588 / NCTC 13252 / RB50) (Alcaligenes bronchisepticus).